A 169-amino-acid chain; its full sequence is Crossover junction endodeoxyribonuclease RuvC (169 aa).

Active-site residues include Asp-7, Glu-67, and Asp-139. Mg(2+) is bound by residues Asp-7, Glu-67, and Asp-139.

Belongs to the RuvC family. Homodimer which binds Holliday junction (HJ) DNA. The HJ becomes 2-fold symmetrical on binding to RuvC with unstacked arms; it has a different conformation from HJ DNA in complex with RuvA. In the full resolvosome a probable DNA-RuvA(4)-RuvB(12)-RuvC(2) complex forms which resolves the HJ. Mg(2+) is required as a cofactor.

The protein resides in the cytoplasm. It catalyses the reaction Endonucleolytic cleavage at a junction such as a reciprocal single-stranded crossover between two homologous DNA duplexes (Holliday junction).. In terms of biological role, the RuvA-RuvB-RuvC complex processes Holliday junction (HJ) DNA during genetic recombination and DNA repair. Endonuclease that resolves HJ intermediates. Cleaves cruciform DNA by making single-stranded nicks across the HJ at symmetrical positions within the homologous arms, yielding a 5'-phosphate and a 3'-hydroxyl group; requires a central core of homology in the junction. The consensus cleavage sequence is 5'-(A/T)TT(C/G)-3'. Cleavage occurs on the 3'-side of the TT dinucleotide at the point of strand exchange. HJ branch migration catalyzed by RuvA-RuvB allows RuvC to scan DNA until it finds its consensus sequence, where it cleaves and resolves the cruciform DNA. The chain is Crossover junction endodeoxyribonuclease RuvC from Rhodospirillum rubrum (strain ATCC 11170 / ATH 1.1.1 / DSM 467 / LMG 4362 / NCIMB 8255 / S1).